Here is a 154-residue protein sequence, read N- to C-terminus: Ribonuclease H (154 aa).

One can recognise an RNase H type-1 domain in the interval 5-147; it reads GKSRVAIYTD…ADMLARGEVE (143 aa). The Mg(2+) site is built by D14, E53, D75, and D139.

The protein belongs to the RNase H family. In terms of assembly, monomer. Requires Mg(2+) as cofactor.

It localises to the cytoplasm. The enzyme catalyses Endonucleolytic cleavage to 5'-phosphomonoester.. Its function is as follows. Endonuclease that specifically degrades the RNA of RNA-DNA hybrids. This is Ribonuclease H from Anaplasma marginale (strain St. Maries).